We begin with the raw amino-acid sequence, 496 residues long: Lysine--tRNA ligase (496 aa).

Positions 405 and 412 each coordinate Mg(2+).

This sequence belongs to the class-II aminoacyl-tRNA synthetase family. In terms of assembly, homodimer. It depends on Mg(2+) as a cofactor.

The protein localises to the cytoplasm. The catalysed reaction is tRNA(Lys) + L-lysine + ATP = L-lysyl-tRNA(Lys) + AMP + diphosphate. This Vesicomyosocius okutanii subsp. Calyptogena okutanii (strain HA) protein is Lysine--tRNA ligase.